Here is a 69-residue protein sequence, read N- to C-terminus: DNA gyrase inhibitor YacG (69 aa).

The segment at 1–28 (MSGEGKKHGSNVEPLRPTRPCPECGRPS) is disordered. Residues C21, C24, C36, and C40 each coordinate Zn(2+).

It belongs to the DNA gyrase inhibitor YacG family. Interacts with GyrB. Zn(2+) is required as a cofactor.

Functionally, inhibits all the catalytic activities of DNA gyrase by preventing its interaction with DNA. Acts by binding directly to the C-terminal domain of GyrB, which probably disrupts DNA binding by the gyrase. This Sinorhizobium fredii (strain NBRC 101917 / NGR234) protein is DNA gyrase inhibitor YacG.